Reading from the N-terminus, the 808-residue chain is Glutamate receptor 1.1 (808 aa).

The first 19 residues, 1 to 19, serve as a signal peptide directing secretion; sequence MEILFSISILALLFSGVVA. The Extracellular segment spans residues 20–541; the sequence is APSDDDVFEE…MWTFFDPFEK (522 aa). Asn-288, Asn-339, and Asn-504 each carry an N-linked (GlcNAc...) asparagine glycan. Residues 542-562 traverse the membrane as a helical segment; it reads SLWLASGAFFVLTGIVVWLVE. Residues 563 to 570 are Cytoplasmic-facing; sequence RSVNPEFQ. The chain crosses the membrane as a helical span at residues 571–591; it reads GSWGQQLSMMLWFGFSTIVFA. Residues 592-602 lie on the Cytoplasmic side of the membrane; it reads HREKLQKMSSR. A helical membrane pass occupies residues 603–623; it reads FLVIVWVFVVLILTSSYSANL. The Extracellular portion of the chain corresponds to 624 to 771; that stretch reads TSTKTISRMQ…SKRFTFRELR (148 aa). Residues 772-792 form a helical membrane-spanning segment; it reads GLFIIAGAAHVLVLALHLFHT. Residues 793-808 are Cytoplasmic-facing; it reads RQEVSRLCTKLQSFYK.

This sequence belongs to the glutamate-gated ion channel (TC 1.A.10.1) family. In terms of assembly, may form heteromers. Expressed predominantly in roots. First detected in the root-shoot junction, and later in lateral roots and at the margin of matures leaves.

Its subcellular location is the membrane. Its function is as follows. Glutamate-gated receptor that probably acts as a non-selective cation channel. Can transport sodium, potassium, and calcium ions. Functions as a carbon and nitrogen regulator and/or sensor that regulates carbon and nitrogen metabolism and distinct physiological process such as germination through the control of acid abscisic (ABA) biosynthesis. May be involved in light-signal transduction and calcium homeostasis via the regulation of calcium influx into cells. Seems required for the regulation of the abscisic acid (ABA) signaling pathway that modulates many aspects of plant physiology such as seed germination and response to drought (e.g. stomata opening). In Arabidopsis thaliana (Mouse-ear cress), this protein is Glutamate receptor 1.1 (GLR1.1).